The following is a 145-amino-acid chain: CBS domain-containing protein DDB_G0289609 (145 aa).

CBS domains lie at 9–66 and 84–141; these read MSKS…FLPE and MKQN…LEPV.

In Dictyostelium discoideum (Social amoeba), this protein is CBS domain-containing protein DDB_G0289609.